The chain runs to 498 residues: Guanosine-5'-triphosphate,3'-diphosphate pyrophosphatase (498 aa).

This sequence belongs to the GppA/Ppx family. GppA subfamily.

The enzyme catalyses guanosine 3'-diphosphate 5'-triphosphate + H2O = guanosine 3',5'-bis(diphosphate) + phosphate + H(+). The protein operates within purine metabolism; ppGpp biosynthesis; ppGpp from GTP: step 2/2. In terms of biological role, catalyzes the conversion of pppGpp to ppGpp. Guanosine pentaphosphate (pppGpp) is a cytoplasmic signaling molecule which together with ppGpp controls the 'stringent response', an adaptive process that allows bacteria to respond to amino acid starvation, resulting in the coordinated regulation of numerous cellular activities. This is Guanosine-5'-triphosphate,3'-diphosphate pyrophosphatase from Pectobacterium carotovorum subsp. carotovorum (strain PC1).